Consider the following 513-residue polypeptide: Na(+)/H(+) antiporter NhaB (513 aa).

The next 12 helical transmembrane spans lie at 23-43 (LALI…PFVA), 52-72 (IFTL…LLAI), 97-117 (LLLM…LFIF), 120-140 (LLLS…AAAF), 144-164 (FLDA…FYGI), 202-222 (LMMH…VGEP), 238-258 (FFLR…LTCL), 303-323 (AIIG…VGLI), 348-368 (TESL…AVII), 391-411 (LFYI…VGTI), 447-467 (ATPN…APLI), and 475-495 (VWMA…CVEF).

It belongs to the NhaB Na(+)/H(+) (TC 2.A.34) antiporter family.

The protein resides in the cell inner membrane. The catalysed reaction is 2 Na(+)(in) + 3 H(+)(out) = 2 Na(+)(out) + 3 H(+)(in). Its function is as follows. Na(+)/H(+) antiporter that extrudes sodium in exchange for external protons. This chain is Na(+)/H(+) antiporter NhaB, found in Shigella sonnei (strain Ss046).